The following is a 171-amino-acid chain: Small ribosomal subunit protein uS5 (171 aa).

The S5 DRBM domain maps to 15–78 (LEEKVVKINR…EKAKKQLVRI (64 aa)).

The protein belongs to the universal ribosomal protein uS5 family. As to quaternary structure, part of the 30S ribosomal subunit. Contacts proteins S4 and S8.

In terms of biological role, with S4 and S12 plays an important role in translational accuracy. Functionally, located at the back of the 30S subunit body where it stabilizes the conformation of the head with respect to the body. This Onion yellows phytoplasma (strain OY-M) protein is Small ribosomal subunit protein uS5.